The primary structure comprises 432 residues: Glutamyl-tRNA reductase (432 aa).

Substrate contacts are provided by residues 55–58, serine 114, 119–121, and glutamine 125; these read TCNR and ETQ. The active-site Nucleophile is cysteine 56. 194-199 lines the NADP(+) pocket; that stretch reads GAGEMI.

The protein belongs to the glutamyl-tRNA reductase family. As to quaternary structure, homodimer.

The enzyme catalyses (S)-4-amino-5-oxopentanoate + tRNA(Glu) + NADP(+) = L-glutamyl-tRNA(Glu) + NADPH + H(+). The protein operates within porphyrin-containing compound metabolism; protoporphyrin-IX biosynthesis; 5-aminolevulinate from L-glutamyl-tRNA(Glu): step 1/2. Catalyzes the NADPH-dependent reduction of glutamyl-tRNA(Glu) to glutamate 1-semialdehyde (GSA). In Burkholderia ambifaria (strain ATCC BAA-244 / DSM 16087 / CCUG 44356 / LMG 19182 / AMMD) (Burkholderia cepacia (strain AMMD)), this protein is Glutamyl-tRNA reductase.